Reading from the N-terminus, the 122-residue chain is Small ribosomal subunit protein uS13 (122 aa).

The segment at 94–122 (SLPVRGQRTKTNARTRKVHVSRSKNSRGK) is disordered.

Belongs to the universal ribosomal protein uS13 family. In terms of assembly, part of the 30S ribosomal subunit. Forms a loose heterodimer with protein S19. Forms two bridges to the 50S subunit in the 70S ribosome.

Functionally, located at the top of the head of the 30S subunit, it contacts several helices of the 16S rRNA. In the 70S ribosome it contacts the 23S rRNA (bridge B1a) and protein L5 of the 50S subunit (bridge B1b), connecting the 2 subunits; these bridges are implicated in subunit movement. Contacts the tRNAs in the A and P-sites. The sequence is that of Small ribosomal subunit protein uS13 from Haemophilus influenzae (strain ATCC 51907 / DSM 11121 / KW20 / Rd).